We begin with the raw amino-acid sequence, 285 residues long: MLYLTKISNAGSEFTENEQKIADFLQANVSELQSVSSRQMAKQLGISQSSIVKFAQKLGAQGFTELRMALIGEYSASREKTNTTALHLHSSITSDDSLEVIARKLNREKELALEQTCALFDYARLQKIIEVISKAPFIQITGLGGSALVGRDLSFKLMKIGYRVACEADTHVQATVSQALKKGDVQIAISYSGSKKEIVLCVEAARKQGATVIAITSLADSPLRRLAHFTLDTVSGETEWRSSSMSTRTAQNSVTDLLFVGLVQLNDVASLKMIQRSSELTQRLK.

One can recognise an HTH rpiR-type domain in the interval 1 to 77 (MLYLTKISNA…MALIGEYSAS (77 aa)). The H-T-H motif DNA-binding region spans 37–56 (SRQMAKQLGISQSSIVKFAQ). In terms of domain architecture, SIS spans 128–279 (IIEVISKAPF…SLKMIQRSSE (152 aa)).

In terms of assembly, homotetramer.

It participates in amino-sugar metabolism; N-acetylmuramate degradation [regulation]. In terms of biological role, represses the expression of the murPQ operon involved in the uptake and degradation of N-acetylmuramic acid (MurNAc). Binds to two adjacent inverted repeats within the operator region. MurNAc 6-phosphate, the substrate of MurQ, is the specific inducer that weakens binding of MurR to the operator. The polypeptide is HTH-type transcriptional regulator MurR (Shigella boydii serotype 4 (strain Sb227)).